The primary structure comprises 132 residues: Interleukin-5 (132 aa).

The first 19 residues, 1-19 (MRMLLHLSILTLACVWTFA), serve as a signal peptide directing secretion. N-linked (GlcNAc...) asparagine glycans are attached at residues Asn45, Asn74, and Asn88.

Belongs to the IL-5 family. As to quaternary structure, homodimer; disulfide-linked. Interacts with IL5RA. Interacts with CSF2RB.

The protein localises to the secreted. Functionally, homodimeric cytokine expressed predominantly by T-lymphocytes and NK cells that plays an important role in the survival, differentiation, and chemotaxis of eosinophils. Also acts on activated and resting B-cells to induce immunoglobulin production, growth, and differentiation. Mechanistically, exerts its biological effects through a receptor composed of IL5RA subunit and the cytokine receptor common subunit beta/CSF2RB. Binding to the receptor leads to activation of various kinases including LYN, SYK and JAK2 and thereby propagates signals through the RAS-MAPK and JAK-STAT5 pathways respectively. This Sigmodon hispidus (Hispid cotton rat) protein is Interleukin-5 (IL5).